Here is a 182-residue protein sequence, read N- to C-terminus: ATP synthase subunit delta (182 aa).

The protein belongs to the ATPase delta chain family. As to quaternary structure, F-type ATPases have 2 components, F(1) - the catalytic core - and F(0) - the membrane proton channel. F(1) has five subunits: alpha(3), beta(3), gamma(1), delta(1), epsilon(1). CF(0) has four main subunits: a(1), b(1), b'(1) and c(10-14). The alpha and beta chains form an alternating ring which encloses part of the gamma chain. F(1) is attached to F(0) by a central stalk formed by the gamma and epsilon chains, while a peripheral stalk is formed by the delta, b and b' chains.

It is found in the cellular thylakoid membrane. In terms of biological role, f(1)F(0) ATP synthase produces ATP from ADP in the presence of a proton or sodium gradient. F-type ATPases consist of two structural domains, F(1) containing the extramembraneous catalytic core and F(0) containing the membrane proton channel, linked together by a central stalk and a peripheral stalk. During catalysis, ATP synthesis in the catalytic domain of F(1) is coupled via a rotary mechanism of the central stalk subunits to proton translocation. Functionally, this protein is part of the stalk that links CF(0) to CF(1). It either transmits conformational changes from CF(0) to CF(1) or is implicated in proton conduction. This chain is ATP synthase subunit delta, found in Synechococcus sp. (strain JA-3-3Ab) (Cyanobacteria bacterium Yellowstone A-Prime).